Here is a 91-residue protein sequence, read N- to C-terminus: Small ribosomal subunit protein uS19 (91 aa).

This sequence belongs to the universal ribosomal protein uS19 family.

Its function is as follows. Protein S19 forms a complex with S13 that binds strongly to the 16S ribosomal RNA. The protein is Small ribosomal subunit protein uS19 of Burkholderia cenocepacia (strain HI2424).